The primary structure comprises 356 residues: tRNA N6-adenosine threonylcarbamoyltransferase (356 aa).

Positions 124, 128, and 145 each coordinate a divalent metal cation. Residues 145–149 (YVSGG), D177, G192, E196, and N287 contribute to the substrate site. Position 315 (D315) interacts with a divalent metal cation.

Belongs to the KAE1 / TsaD family. As to quaternary structure, component of the EKC/KEOPS complex composed of at least BUD32, CGI121, GON7, KAE1 and PCC1; the whole complex dimerizes. It depends on a divalent metal cation as a cofactor.

The protein localises to the cytoplasm. It is found in the nucleus. The catalysed reaction is L-threonylcarbamoyladenylate + adenosine(37) in tRNA = N(6)-L-threonylcarbamoyladenosine(37) in tRNA + AMP + H(+). Its function is as follows. Component of the EKC/KEOPS complex that is required for the formation of a threonylcarbamoyl group on adenosine at position 37 (t(6)A37) in tRNAs that read codons beginning with adenine. The complex is probably involved in the transfer of the threonylcarbamoyl moiety of threonylcarbamoyl-AMP (TC-AMP) to the N6 group of A37. KAE1 likely plays a direct catalytic role in this reaction, but requires other protein(s) of the complex to fulfill this activity. The EKC/KEOPS complex also promotes both telomere uncapping and telomere elongation. The complex is required for efficient recruitment of transcriptional coactivators. This Yarrowia lipolytica (strain CLIB 122 / E 150) (Yeast) protein is tRNA N6-adenosine threonylcarbamoyltransferase.